The chain runs to 161 residues: Protein-export protein SecB (161 aa).

This sequence belongs to the SecB family. As to quaternary structure, homotetramer, a dimer of dimers. One homotetramer interacts with 1 SecA dimer.

It is found in the cytoplasm. Functionally, one of the proteins required for the normal export of preproteins out of the cell cytoplasm. It is a molecular chaperone that binds to a subset of precursor proteins, maintaining them in a translocation-competent state. It also specifically binds to its receptor SecA. The protein is Protein-export protein SecB of Bradyrhizobium diazoefficiens (strain JCM 10833 / BCRC 13528 / IAM 13628 / NBRC 14792 / USDA 110).